The primary structure comprises 630 residues: RRTKRFASLSRFVETLVVADDKMAAFHGAGLKHYLLTVMAAAAKAFKHPSIRNPVNLVVTRLVILGSGQEVPQVGPSAAQTLRSFCTWQKGLNPPNDSDPDHFDTAILFTRQDLCGVSTCDALGMAGVGTVCDPARSCAIVEDDGLQSAFTAAHELGHVFNMLHDNSKPCANLNGQGSSSRHVMAPVMAHVDPEEPWSPCSARFITDFLDNGYGHCLLDKPEAPLHLPVTFPGKDYDADRQCQLTFGPDSSHCPQLPPPCAALWCFGHLNGHAMCQTKHSPWADGTPCGPAQACMGGRCLHVDQLKDFNIPQAGGWGPWGPWGDCSRTCGGGVQFSSRDCTKPVPRNGGKYCEGRRTPFRSCNTKNCPHGSALTFREEQCAAYNHRTDLFKSFPGPMDWVPRYTGVAPRDQCKLTCQARALGYYYVLEPRVADGTPCSPDSSSVCVQGRCIHAGCDRIIGSKKKFDKCMVCGGNGSSCSKQSGSFKKFRYGYSDVVTIPAGRTHILVRQQGGSGLKSIYLALKLADGSYALNGEYTLMPSSTDVVLPGAVSLRYSGRTAASETLSGHGPLAQPLTLQVLVAGNPQNVRLRYSFFVPRPVPSTPRPPPQNWLQRRAEILEILRKRTWAGRK.

A propeptide spanning residues 1–5 (RRTKR) is cleaved from the precursor. Positions 11–221 (RFVETLVVAD…GYGHCLLDKP (211 aa)) constitute a Peptidase M12B domain. Intrachain disulfides connect C86-C138, C115-C120, C132-C216, C170-C200, C242-C265, C253-C275, C260-C294, C288-C299, C325-C362, C329-C367, and C340-C352. Residue N96 is glycosylated (N-linked (GlcNAc...) asparagine). H154 serves as a coordination point for Zn(2+). E155 is an active-site residue. Residues H158 and H164 each coordinate Zn(2+). The Disintegrin domain maps to 233–303 (GKDYDADRQC…CMGGRCLHVD (71 aa)). The region spanning 313-368 (AGGWGPWGPWGDCSRTCGGGVQFSSRDCTKPVPRNGGKYCEGRRTPFRSCNTKNCP) is the TSP type-1 domain. N474 is a glycosylation site (N-linked (GlcNAc...) asparagine). The spacer stretch occupies residues 479-630 (SKQSGSFKKF…LRKRTWAGRK (152 aa)).

In terms of assembly, interacts with SRPX2. The cofactor is Zn(2+). In terms of processing, the precursor is cleaved by a furin endopeptidase. Glycosylated. Can be O-fucosylated by POFUT2 on a serine or a threonine residue found within the consensus sequence C1-X(2)-(S/T)-C2-G of the TSP type-1 repeat domains where C1 and C2 are the first and second cysteine residue of the repeat, respectively. Fucosylated repeats can then be further glycosylated by the addition of a beta-1,3-glucose residue by the glucosyltransferase, B3GALTL. Fucosylation mediates the efficient secretion of ADAMTS family members. Can also be C-glycosylated with one or two mannose molecules on tryptophan residues within the consensus sequence W-X-X-W of the TPRs, and N-glycosylated. These other glycosylations can also facilitate secretion. As to expression, brain specific.

Its subcellular location is the secreted. It is found in the extracellular space. The protein resides in the extracellular matrix. It catalyses the reaction Glutamyl endopeptidase. Bonds cleaved include 370-Thr-Glu-Gly-Glu-|-Ala-Arg-Gly-Ser-377 in the interglobular domain of mammalian aggrecan.. In terms of biological role, cleaves aggrecan, a cartilage proteoglycan, at the '392-Glu-|-Ala-393' site and may be involved in its turnover. Also cleaves COMP. May play an important role in the destruction of aggrecan in arthritic diseases. The sequence is that of A disintegrin and metalloproteinase with thrombospondin motifs 4 (Adamts4) from Rattus norvegicus (Rat).